The chain runs to 178 residues: Cytochrome b6-f complex iron-sulfur subunit (178 aa).

The helical transmembrane segment at 20–42 (LLTFGTATGVALGALYPVANYFM) threads the bilayer. The 91-residue stretch at 71-161 (NHPAGDRSLV…IDVEDDKVFV (91 aa)) folds into the Rieske domain. [2Fe-2S] cluster contacts are provided by Cys107, His109, Cys125, and His128. Residues Cys112 and Cys127 are joined by a disulfide bond.

This sequence belongs to the Rieske iron-sulfur protein family. In terms of assembly, the 4 large subunits of the cytochrome b6-f complex are cytochrome b6, subunit IV (17 kDa polypeptide, PetD), cytochrome f and the Rieske protein, while the 4 small subunits are PetG, PetL, PetM and PetN. The complex functions as a dimer. It depends on [2Fe-2S] cluster as a cofactor.

The protein localises to the cellular thylakoid membrane. The catalysed reaction is 2 oxidized [plastocyanin] + a plastoquinol + 2 H(+)(in) = 2 reduced [plastocyanin] + a plastoquinone + 4 H(+)(out). In terms of biological role, component of the cytochrome b6-f complex, which mediates electron transfer between photosystem II (PSII) and photosystem I (PSI), cyclic electron flow around PSI, and state transitions. This Prochlorococcus marinus (strain MIT 9211) protein is Cytochrome b6-f complex iron-sulfur subunit.